The primary structure comprises 142 residues: Large ribosomal subunit protein uL13 (142 aa).

It belongs to the universal ribosomal protein uL13 family. In terms of assembly, part of the 50S ribosomal subunit.

This protein is one of the early assembly proteins of the 50S ribosomal subunit, although it is not seen to bind rRNA by itself. It is important during the early stages of 50S assembly. The protein is Large ribosomal subunit protein uL13 of Wigglesworthia glossinidia brevipalpis.